We begin with the raw amino-acid sequence, 1388 residues long: Rho-associated protein kinase 2 (1388 aa).

Positions 1–27 (MSRPPPTGKMPGAPETAPGDGAGASRQ) are disordered. Residues 92–354 (YDVVKVIGRG…VEEIRQHPFF (263 aa)) enclose the Protein kinase domain. Residues 98-106 (IGRGAFGEV) and K121 contribute to the ATP site. D214 (proton acceptor) is an active-site residue. One can recognise an AGC-kinase C-terminal domain in the interval 357–425 (DQWHWDNIRE…YRENLLLSDS (69 aa)). The tract at residues 363 to 784 (NIRETAAPVV…INELLKQKDV (422 aa)) is interaction with PPP1R12A. The interaction with NPM1 stretch occupies residues 373-420 (PELSSDIDSSNFDDIEDDKGDVETFPIPKAFVGNQLPFIGFTYYRENL). Residue T414 is modified to Phosphothreonine; by ROCK2. Coiled coils occupy residues 429-1024 (RETD…EKQL) and 1053-1131 (DTDV…IGLD). Positions 497 to 573 (ALRQLEREKA…LDETNALLRT (77 aa)) constitute an REM-1 domain. Position 722 is a phosphotyrosine; by SRC (Y722). One can recognise a RhoBD domain in the interval 979–1047 (TSDVANLANE…LAEIMNRKEP (69 aa)). The segment at 979–1047 (TSDVANLANE…LAEIMNRKEP (69 aa)) is RHOA binding. S1137 bears the Phosphoserine mark. Positions 1150 to 1349 (ESRLEGWLSL…WVSRLVKKIP (200 aa)) constitute a PH domain. The residue at position 1212 (T1212) is a Phosphothreonine. The segment at 1260-1315 (GHEFIPTLYHFPTNCEACMKPLWHMFKPPPALECRRCHIKCHKDHMDKKEEIIAPC) adopts a Phorbol-ester/DAG-type zinc-finger fold. Residues 1345–1388 (VKKIPKKPPAPDPFARSSPRTSMKIQQNQSIRRPSRQLAPNKPS) are disordered. Phosphoserine is present on residues S1362 and S1374. The segment covering 1362–1376 (SPRTSMKIQQNQSIR) has biased composition (polar residues).

Belongs to the protein kinase superfamily. AGC Ser/Thr protein kinase family. Homodimer. Interacts with IRS1. Interacts with RAF1. Interacts with RHOA (activated by GTP), RHOB and RHOC. Interacts with PPP1R12A. Interacts with EP300. Interacts with CHORDC1. Interacts with BRCA2. Interacts with NPM1; this interaction enhances ROCK2 activity. Interacts with SORL1. Interacts with PJVK. Mg(2+) serves as cofactor. Post-translationally, phosphorylation at Tyr-722 reduces its binding to RHOA and is crucial for focal adhesion dynamics. Dephosphorylation by PTPN11 stimulates its RHOA binding activity. Cleaved by granzyme B during apoptosis. This leads to constitutive activation of the kinase and membrane blebbing. Expressed in the brain (at protein level).

Its subcellular location is the cytoplasm. It is found in the cell membrane. The protein resides in the nucleus. The protein localises to the cytoskeleton. It localises to the microtubule organizing center. Its subcellular location is the centrosome. It carries out the reaction L-seryl-[protein] + ATP = O-phospho-L-seryl-[protein] + ADP + H(+). The enzyme catalyses L-threonyl-[protein] + ATP = O-phospho-L-threonyl-[protein] + ADP + H(+). With respect to regulation, activated by RHOA binding. Inhibited by Y-27632. Functionally, protein kinase which is a key regulator of actin cytoskeleton and cell polarity. Involved in regulation of smooth muscle contraction, actin cytoskeleton organization, stress fiber and focal adhesion formation, neurite retraction, cell adhesion and motility via phosphorylation of ADD1, BRCA2, CNN1, EZR, DPYSL2, EP300, MSN, MYL9/MLC2, NPM1, RDX, PPP1R12A and VIM. Phosphorylates SORL1 and IRF4. Acts as a negative regulator of VEGF-induced angiogenic endothelial cell activation. Positively regulates the activation of p42/MAPK1-p44/MAPK3 and of p90RSK/RPS6KA1 during myogenic differentiation. Plays an important role in the timely initiation of centrosome duplication. Inhibits keratinocyte terminal differentiation. May regulate closure of the eyelids and ventral body wall through organization of actomyosin bundles. Plays a critical role in the regulation of spine and synaptic properties in the hippocampus. Plays an important role in generating the circadian rhythm of the aortic myofilament Ca(2+) sensitivity and vascular contractility by modulating the myosin light chain phosphorylation. In Homo sapiens (Human), this protein is Rho-associated protein kinase 2 (ROCK2).